Consider the following 3432-residue polypeptide: MTKKPGGPGKNRAINMLKRGLPRVFPLVGVKRVVMSLLDGRGPVRFVLALITFFKFTALAPTKALLGRWKAVEKSVAMKHLTSFKRELGTLIDAVNKRGRKQNKRGGNEGSIMWLASLAVVIAYAGAMKLSNFQGKLLMTINNTDIADVIVIPTSKGENRCWVRAIDVGYMCEDTITYECPKLTMGNDPEDVDCWCDNQEVYVQYGRCTRTRHSKRSRRSVSVQTHGESSLVNKKEAWLDSTKATRYLMKTENWIIRNPGYAFLAATLGWMLGSNNGQRVVFTILLLLVAPAYSFNCLGMGNRDFIEGASGATWVDLVLEGDSCLTIMANDKPTLDVRMINIEASQLAEVRSYCYHASVTDISTVARCPTTGEAHNEKRADSSYVCKQGFTDRGWGNGCGLFGKGSIDTCAKFSCTSKAIGRTIQPENIKYEVGIFVHGTTTSENHGNYSAQVGASQAAKFTITPNAPSITLKLGDYGEVTLDCEPRSGLNTEAFYVMTVGSKSFLVHREWFHDLALPWTSPSSTAWRNRELLMEFEEAHATKQSVVALGSQEGGLHQALAGAIVVEYSSSVKLTSGHLKCRLKMDKLALKGTTYGMCTEKFSFAKNPADTGHGTVVIELSYSGSDGPCKIPIVSVASLNDMTPVGRLVTVNPFVATSSANSKVLVEMEPPFGDSYIVVGRGDKQINHHWHKAGSTLGKAFSTTLKGAQRLAALGDTAWDFGSIGGVFNSIGKAVHQVFGGAFRTLFGGMSWITQGLMGALLLWMGVNARDRSIALAFLATGGVLVFLATNVHADTGCAIDITRKEMRCGSGIFVHNDVEAWVDRYKYLPETPRSLAKIVHKAHKEGVCGVRSVTRLEHQMWEAVRDELNVLLKENAVDLSVVVNKPVGRYRSAPKRLSMTQEKFEMGWKAWGKSILFAPELANSTFVVDGPETKECPDEHRAWNSMQIEDFGFGITSTRVWLKIREESTDECDGAIIGTAVKGHVAVHSDLSYWIESRYNDTWKLERAVFGEVKSCTWPETHTLWGDGVEESELIIPHTIAGPKSKHNRREGYKTQNQGPWDENGIVLDFDYCPGTKVTITEDCGKRGPSVRTTTDSGKLITDWCCRSCSLPPLRFRTENGCWYGMEIRPVRHDETTLVRSQVDAFNGEMVDPFQLGLLVMFLATQEVLRKRWTARLTIPAVLGALLVLMLGGITYTDLARYVVLVAAAFAEANSGGDVLHLALIAVFKIQPAFLVMNMLSTRWTNQENVVLVLGAALFQLASVDLQIGVHGILNAAAIAWMIVRAITFPTTSSVTMPVLALLTPGMRALYLDTYRIILLVIGICSLLQERKKTMAKKKGAVLLGLALTSTGWFSPTTIAAGLMVCNPNKKRGWPATEFLSAVGLMFAIVGGLAELDIESMSIPFMLAGLMAVSYVVSGKATDMWLERAADISWEMDAAITGSSRRLDVKLDDDGDFHLIDDPGVPWKVWVLRMSCIGLAALTPWAIVPAAFGYWLTLKTTKRGGVFWDTPSPKPCSKGDTTTGVYRIMARGILGTYQAGVGVMYENVFHTLWHTTRGAAIMSGEGKLTPYWGSVKEDRIAYGGPWRFDRKWNGTDDVQVIVVEPGKAAVNIQTKPGVFRTPFGEVGAVSLDYPRGTSGSPILDSNGDIIGLYGNGVELGDGSYVSAIVQGDRQEEPVPEAYTPNMLRKRQMTVLDLHPGSGKTRKILPQIIKDAIQQRLRTAVLAPTRVVAAEMAEALRGLPVRYQTSAVQREHQGNEIVDVMCHATLTHRLMSPNRVPNYNLFVMDEAHFTDPASIAARGYIATKVELGEAAAIFMTATPPGTTDPFPDSNAPIHDLQDEIPDRAWSSGYEWITEYAGKTVWFVASVKMGNEIAMCLQRAGKKVIQLNRKSYDTEYPKCKNGDWDFVITTDISEMGANFGASRVIDCRKSVKPTILEEGEGRVILGNPSPITSASAAQRRGRVGRNPNQVGDEYHYGGATSEDDSNLAHWTEAKIMLDNIHMPNGLVAQLYGPEREKAFTMDGEYRLRGEEKKNFLELLRTADLPVWLAYKVASNGIQYTDRRWCFDGPRTNAILEDNTEVEIVTRMGERKILKPRWLDARVYADHQALKWFKDFAAGKRSAISFIEVLGRMPEHFMGKTREALDTMYLVATAEKGGKAHRMALEELPDALETITLIVAITVMTGGFFLLMMQRKGIGKMGLGALVLTLATFFLWAAEVPGTKIAGTLLIALLLMVVLIPEPEKQRSQTDNQLAVFLICVLTVVGVVAANEYGMLEKTKADLKSMFVGKTQASGLTGLPSMALDLRPATAWALYGGSTVVLTPLLKHLITSEYVTTSLASINSQAGSLFVLPRGVPFTDLDLTVGLVFLGCWGQITLTTFLTAMVLATLHYGYMLPGWQAEALRAAQRRTAAGIMKNAVVDGMVATDVPELERTTPLMQKKVGQVLLIGVSVAAFLVNPNVTTVREAGVLVTAATLTLWDNGASAVWNSTTATGLCHVMRGSYLAGGSIAWTLIKNADKPSLKRGRPGGRTLGEQWKEKLNAMSREEFFKYRREAIIEVDRTEARRARRENNIVGGHPVSRGSAKLRWLVEKGFVSPIGKVIDLGCGRGGWSYYAATLKKVQEVRGYTKGGAGHEEPMLMQSYGRNLVSLKSGVDVFYKPSEPSDTLFCDIGESSPSPEVEEQRTLRVLEMTSDWLHRGPREFCIKVLCPYMPKVIEKMEVLQRRFGGGLVRLPLSRNSNHEMYWVSGAAGNVVHAVNMTSQVLLGRMDRTVWRGPKYEEDVNLGSGTRAVGKGEVHSNQEKIKKRIQKLKEEFATTWHKDPEHPYRTWTYHGSYEVKATGSASSLVNGVVKLMSKPWDAIANVTTMAMTDTTPFGQQRVFKEKVDTKAPEPPAGAKEVLNETTNWLWAHLSREKRPRLCTKEEFIKKVNSNAALGAVFAEQNQWSTAREAVDDPRFWEMVDEERENHLRGECHTCIYNMMGKREKKPGEFGKAKGSRAIWFMWLGARYLEFEALGFLNEDHWLSRENSGGGVEGSGVQKLGYILRDIAGKQGGKMYADDTAGWDTRITRTDLENEAKVLELLDGEHRMLARAIIELTYRHKVVKVMRPAAEGKTVMDVISREDQRGSGQVVTYALNTFTNIAVQLVRLMEAEGVIGPQHLEQLPRKTKIAVRTWLFENGEERVTRMAISGDDCVVKPLDDRFATALHFLNAMSKVRKDIQEWKPSHGWHDWQQVPFCSNHFQEIVMKDGRSIVVPCRGQDELIGRARISPGAGWNVKDTACLAKAYAQMWLLLYFHRRDLRLMANAICSAVPVDWVPTGRTSWSIHSKGEWMTTEDMLQVWNRVWIEENEWMMDKTPITSWTDVPYVGKREDIWCGSLIGTRSRATWAENIYAAINQVRAVIGKENYVDYMTSLRRYEDVLIQEDRVI.

The tract at residues 2–15 (TKKPGGPGKNRAIN) is interaction with host EXOC1. At 2 to 109 (TKKPGGPGKN…RKQNKRGGNE (108 aa)) the chain is on the cytoplasmic side. Residues 37 to 72 (LLDGRGPVRFVLALITFFKFTALAPTKALLGRWKAV) are hydrophobic; homodimerization of capsid protein C. Positions 106–127 (GGNEGSIMWLASLAVVIAYAGA) are cleaved as a propeptide — ER anchor for the capsid protein C, removed in mature form by serine protease NS3. The chain crosses the membrane as a helical span at residues 110–130 (GSIMWLASLAVVIAYAGAMKL). Residues 131–253 (SNFQGKLLMT…ATRYLMKTEN (123 aa)) lie on the Extracellular side of the membrane. Residue Asn142 is glycosylated (N-linked (GlcNAc...) asparagine; by host). A helical transmembrane segment spans residues 254-274 (WIIRNPGYAFLAATLGWMLGS). Topologically, residues 275–279 (NNGQR) are cytoplasmic. Residues 280–294 (VVFTILLLLVAPAYS) traverse the membrane as a helical segment. The Extracellular portion of the chain corresponds to 295–746 (FNCLGMGNRD…QVFGGAFRTL (452 aa)). 6 cysteine pairs are disulfide-bonded: Cys297-Cys324, Cys354-Cys410, Cys354-Cys415, Cys368-Cys399, Cys386-Cys410, and Cys386-Cys415. A fusion peptide region spans residues 392-405 (DRGWGNGCGLFGKG). Residue Asn448 is glycosylated (N-linked (GlcNAc...) asparagine; by host). 2 disulfide bridges follow: Cys484/Cys581 and Cys598/Cys629. A helical transmembrane segment spans residues 747–767 (FGGMSWITQGLMGALLLWMGV). The Cytoplasmic segment spans residues 768 to 773 (NARDRS). Residues 774-794 (IALAFLATGGVLVFLATNVHA) traverse the membrane as a helical segment. Topologically, residues 795–1219 (DTGCAIDITR…AFAEANSGGD (425 aa)) are extracellular. Intrachain disulfides connect Cys798/Cys809, Cys849/Cys937, Cys973/Cys1017, Cys1074/Cys1123, Cys1085/Cys1106, and Cys1107/Cys1110. 2 N-linked (GlcNAc...) asparagine; by host glycosylation sites follow: Asn924 and Asn1001. A helical transmembrane segment spans residues 1220-1240 (VLHLALIAVFKIQPAFLVMNM). The Cytoplasmic portion of the chain corresponds to 1241-1250 (LSTRWTNQEN). Residues 1251-1271 (VVLVLGAALFQLASVDLQIGV) traverse the membrane as a helical segment. A topological domain (lumenal) is located at residue His1272. The helical transmembrane segment at 1273–1293 (GILNAAAIAWMIVRAITFPTT) threads the bilayer. Residues 1294-1309 (SSVTMPVLALLTPGMR) lie on the Cytoplasmic side of the membrane. The helical transmembrane segment at 1310 to 1330 (ALYLDTYRIILLVIGICSLLQ) threads the bilayer. Residues 1331–1341 (ERKKTMAKKKG) lie on the Lumenal side of the membrane. A helical transmembrane segment spans residues 1342–1362 (AVLLGLALTSTGWFSPTTIAA). Topologically, residues 1363-1374 (GLMVCNPNKKRG) are cytoplasmic. The chain crosses the membrane as a helical span at residues 1375 to 1395 (WPATEFLSAVGLMFAIVGGLA). Residues 1396 to 1398 (ELD) are Lumenal-facing. A helical transmembrane segment spans residues 1399 to 1419 (IESMSIPFMLAGLMAVSYVVS). Topologically, residues 1420–1476 (GKATDMWLERAADISWEMDAAITGSSRRLDVKLDDDGDFHLIDDPGVPWKVWVLRMS) are cytoplasmic. The tract at residues 1427-1466 (LERAADISWEMDAAITGSSRRLDVKLDDDGDFHLIDDPGV) is interacts with and activates NS3 protease. Positions 1477–1497 (CIGLAALTPWAIVPAAFGYWL) form an intramembrane region, helical. Over 1498-2173 (TLKTTKRGGV…RMALEELPDA (676 aa)) the chain is Cytoplasmic. Residues 1505 to 1682 (GGVFWDTPSP…DRQEEPVPEA (178 aa)) enclose the Peptidase S7 domain. Residues His1555, Asp1579, and Ser1639 each act as charge relay system; for serine protease NS3 activity in the active site. The 157-residue stretch at 1685–1841 (PNMLRKRQMT…DSNAPIHDLQ (157 aa)) folds into the Helicase ATP-binding domain. Positions 1689–1692 (RKRQ) are important for RNA-binding. 1698–1705 (LHPGSGKT) is a binding site for ATP. The DEAH box motif lies at 1789–1792 (DEAH). Positions 1852-2017 (GYEWITEYAG…GLVAQLYGPE (166 aa)) constitute a Helicase C-terminal domain. Lys1893 bears the N6-acetyllysine; by host mark. The segment at 1950–1971 (NPSPITSASAAQRRGRVGRNPN) is disordered. Residues 2168–2172 (EELPD) are regulates the ATPase activity of NS3 helicase. A helical membrane pass occupies residues 2174-2194 (LETITLIVAITVMTGGFFLLM). Residues 2195 to 2199 (MQRKG) lie on the Lumenal side of the membrane. The segment at residues 2200 to 2220 (IGKMGLGALVLTLATFFLWAA) is an intramembrane region (helical). Residue Glu2221 is a topological domain, lumenal. The chain crosses the membrane as a helical span at residues 2222 to 2242 (VPGTKIAGTLLIALLLMVVLI). At 2243 to 2257 (PEPEKQRSQTDNQLA) the chain is on the cytoplasmic side. Residues 2258–2278 (VFLICVLTVVGVVAANEYGML) form a helical membrane-spanning segment. Over 2279 to 2311 (EKTKADLKSMFVGKTQASGLTGLPSMALDLRPA) the chain is Lumenal. An intramembrane region (helical) is located at residues 2312 to 2332 (TAWALYGGSTVVLTPLLKHLI). Over 2333 to 2368 (TSEYVTTSLASINSQAGSLFVLPRGVPFTDLDLTVG) the chain is Lumenal. A helical transmembrane segment spans residues 2369–2389 (LVFLGCWGQITLTTFLTAMVL). Over 2390–2444 (ATLHYGYMLPGWQAEALRAAQRRTAAGIMKNAVVDGMVATDVPELERTTPLMQKK) the chain is Cytoplasmic. Residues 2445–2465 (VGQVLLIGVSVAAFLVNPNVT) form a helical membrane-spanning segment. The Lumenal portion of the chain corresponds to 2466-2469 (TVRE). The helical transmembrane segment at 2470-2490 (AGVLVTAATLTLWDNGASAVW) threads the bilayer. Residues 2491–3432 (NSTTATGLCH…DVLIQEDRVI (942 aa)) lie on the Cytoplasmic side of the membrane. Residues 2528–2793 (GRPGGRTLGE…DVNLGSGTRA (266 aa)) form the mRNA cap 0-1 NS5-type MT domain. Ser2583 lines the S-adenosyl-L-methionine pocket. Ser2583 is modified (phosphoserine). The For 2'-O-MTase activity role is filled by Lys2588. Residues Gly2613, Trp2614, Thr2631, Lys2632, Asp2658, and Val2659 each coordinate S-adenosyl-L-methionine. Asp2673 (for 2'-O-MTase activity) is an active-site residue. Ile2674 contributes to the S-adenosyl-L-methionine binding site. Catalysis depends on for 2'-O-MTase activity residues Lys2709 and Glu2745. Tyr2747 is a binding site for S-adenosyl-L-methionine. Zn(2+)-binding residues include Glu2967, His2971, Cys2976, and Cys2979. The region spanning 3057–3209 (GKMYADDTAG…KPLDDRFATA (153 aa)) is the RdRp catalytic domain. The Zn(2+) site is built by His3244, Cys3260, and Cys3379.

The protein in the N-terminal section; belongs to the class I-like SAM-binding methyltransferase superfamily. mRNA cap 0-1 NS5-type methyltransferase family. In terms of assembly, homodimer. Interacts (via N-terminus) with host EXOC1 (via C-terminus); this interaction results in EXOC1 degradation through the proteasome degradation pathway. As to quaternary structure, forms heterodimers with envelope protein E in the endoplasmic reticulum and Golgi. Homodimer; in the endoplasmic reticulum and Golgi. Interacts with protein prM. Interacts with non-structural protein 1. Interacts with host HSPA5. In terms of assembly, homodimer; Homohexamer when secreted. Interacts with envelope protein E. NS1 interacts with NS4B. Interacts with host complement protein CFH; this interaction leads to the degradation of C3. As to quaternary structure, interacts (via N-terminus) with serine protease NS3. Forms a heterodimer with serine protease NS3. May form homooligomers. In terms of assembly, forms a heterodimer with NS2B. Interacts with non-structural protein 2A (via N-terminus). Interacts with NS4B. Interacts with unphosphorylated RNA-directed RNA polymerase NS5; this interaction stimulates RNA-directed RNA polymerase NS5 guanylyltransferase activity. Interacts with host ILF2. As to quaternary structure, interacts with serine protease NS3. Homodimer. Interacts with host STAT2; this interaction inhibits the phosphorylation of the latter, and, when all viral proteins are present (polyprotein), targets STAT2 for degradation. Interacts with serine protease NS3. Mn(2+) serves as cofactor. It depends on Mg(2+) as a cofactor. In terms of processing, specific enzymatic cleavages in vivo yield mature proteins. Cleavages in the lumen of endoplasmic reticulum are performed by host signal peptidase, whereas cleavages in the cytoplasmic side are performed by serine protease NS3. Signal cleavage at the 2K-4B site requires a prior NS3 protease-mediated cleavage at the 4A-2K site. Post-translationally, cleaved in post-Golgi vesicles by a host furin, releasing the mature small envelope protein M, and peptide pr. This cleavage is incomplete as up to 30% of viral particles still carry uncleaved prM. N-glycosylated. In terms of processing, N-glycosylated. The excreted form is glycosylated and this is required for efficient secretion of the protein from infected cells. Post-translationally, acetylated by host KAT5. Acetylation modulates NS3 RNA-binding and unwinding activities and plays an important positive role for viral replication. Phosphorylated on serines residues. This phosphorylation may trigger NS5 nuclear localization.

It is found in the virion. The protein localises to the host nucleus. Its subcellular location is the host cytoplasm. It localises to the host perinuclear region. The protein resides in the secreted. It is found in the virion membrane. The protein localises to the host endoplasmic reticulum membrane. Its subcellular location is the host cell surface. It catalyses the reaction Selective hydrolysis of -Xaa-Xaa-|-Yaa- bonds in which each of the Xaa can be either Arg or Lys and Yaa can be either Ser or Ala.. It carries out the reaction RNA(n) + a ribonucleoside 5'-triphosphate = RNA(n+1) + diphosphate. The enzyme catalyses a ribonucleoside 5'-triphosphate + H2O = a ribonucleoside 5'-diphosphate + phosphate + H(+). The catalysed reaction is ATP + H2O = ADP + phosphate + H(+). It catalyses the reaction a 5'-end (5'-triphosphoguanosine)-ribonucleoside in mRNA + S-adenosyl-L-methionine = a 5'-end (N(7)-methyl 5'-triphosphoguanosine)-ribonucleoside in mRNA + S-adenosyl-L-homocysteine. It carries out the reaction a 5'-end (N(7)-methyl 5'-triphosphoguanosine)-ribonucleoside in mRNA + S-adenosyl-L-methionine = a 5'-end (N(7)-methyl 5'-triphosphoguanosine)-(2'-O-methyl-ribonucleoside) in mRNA + S-adenosyl-L-homocysteine + H(+). Plays a role in virus budding by binding to the cell membrane and gathering the viral RNA into a nucleocapsid that forms the core of a mature virus particle. During virus entry, may induce genome penetration into the host cytoplasm after hemifusion induced by the surface proteins. Can migrate to the cell nucleus where it modulates host functions. Overcomes the anti-viral effects of host EXOC1 by sequestering and degrading the latter through the proteasome degradation pathway. In terms of biological role, inhibits RNA silencing by interfering with host Dicer. Its function is as follows. Prevents premature fusion activity of envelope proteins in trans-Golgi by binding to envelope protein E at pH 6.0. After virion release in extracellular space, gets dissociated from E dimers. Functionally, acts as a chaperone for envelope protein E during intracellular virion assembly by masking and inactivating envelope protein E fusion peptide. prM is the only viral peptide matured by host furin in the trans-Golgi network probably to avoid catastrophic activation of the viral fusion activity in acidic Golgi compartment prior to virion release. prM-E cleavage is inefficient, and many virions are only partially matured. These uncleaved prM would play a role in immune evasion. May play a role in virus budding. Exerts cytotoxic effects by activating a mitochondrial apoptotic pathway through M ectodomain. May display a viroporin activity. In terms of biological role, binds to host cell surface receptor and mediates fusion between viral and cellular membranes. Efficient virus attachment to cell is, at least in part, mediated by host HSPA5. Envelope protein is synthesized in the endoplasmic reticulum in the form of heterodimer with protein prM. They play a role in virion budding in the ER, and the newly formed immature particle is covered with 60 spikes composed of heterodimer between precursor prM and envelope protein E. The virion is transported to the Golgi apparatus where the low pH causes dissociation of PrM-E heterodimers and formation of E homodimers. prM-E cleavage is inefficient, and many virions are only partially matured. These uncleaved prM would play a role in immune evasion. Its function is as follows. Involved in immune evasion, pathogenesis and viral replication. Once cleaved off the polyprotein, is targeted to three destinations: the viral replication cycle, the plasma membrane and the extracellular compartment. Essential for viral replication. Required for formation of the replication complex and recruitment of other non-structural proteins to the ER-derived membrane structures. Excreted as a hexameric lipoparticle that plays a role against host immune response. Antagonizing the complement function. Binds to the host macrophages and dendritic cells. Inhibits signal transduction originating from Toll-like receptor 3 (TLR3). Functionally, component of the viral RNA replication complex that functions in virion assembly and antagonizes the host alpha/beta interferon antiviral response. Required cofactor for the serine protease function of NS3. May have membrane-destabilizing activity and form viroporins. In terms of biological role, displays three enzymatic activities: serine protease, NTPase and RNA helicase. NS3 serine protease, in association with NS2B, performs its autocleavage and cleaves the polyprotein at dibasic sites in the cytoplasm: C-prM, NS2A-NS2B, NS2B-NS3, NS3-NS4A, NS4A-2K and NS4B-NS5. NS3 RNA helicase binds RNA and unwinds dsRNA in the 3' to 5' direction. Its function is as follows. Regulates the ATPase activity of the NS3 helicase activity. NS4A allows NS3 helicase to conserve energy during unwinding. Functionally, functions as a signal peptide for NS4B and is required for the interferon antagonism activity of the latter. Induces the formation of ER-derived membrane vesicles where the viral replication takes place. Inhibits interferon (IFN)-induced host STAT1 phosphorylation and nuclear translocation, thereby preventing the establishment of cellular antiviral state by blocking the IFN-alpha/beta pathway. Inhibits STAT2 translocation in the nucleus after IFN-alpha treatment. In terms of biological role, replicates the viral (+) and (-) RNA genome, and performs the capping of genomes in the cytoplasm. NS5 methylates viral RNA cap at guanine N-7 and ribose 2'-O positions. Besides its role in RNA genome replication, also prevents the establishment of cellular antiviral state by blocking the interferon-alpha/beta (IFN-alpha/beta) signaling pathway. Inhibits host TYK2 and STAT2 phosphorylation, thereby preventing activation of JAK-STAT signaling pathway. The polypeptide is Genome polyprotein (Ardeidae (herons)).